The chain runs to 338 residues: Glycerol-3-phosphate dehydrogenase [NAD(P)+] (338 aa).

Serine 13, tryptophan 14, and lysine 108 together coordinate NADPH. Sn-glycerol 3-phosphate contacts are provided by lysine 108, glycine 139, and serine 141. NADPH is bound at residue alanine 143. Positions 194, 247, 257, 258, and 259 each coordinate sn-glycerol 3-phosphate. Lysine 194 serves as the catalytic Proton acceptor. Arginine 258 is a binding site for NADPH. Positions 282 and 284 each coordinate NADPH.

This sequence belongs to the NAD-dependent glycerol-3-phosphate dehydrogenase family.

The protein localises to the cytoplasm. The catalysed reaction is sn-glycerol 3-phosphate + NAD(+) = dihydroxyacetone phosphate + NADH + H(+). It catalyses the reaction sn-glycerol 3-phosphate + NADP(+) = dihydroxyacetone phosphate + NADPH + H(+). The protein operates within membrane lipid metabolism; glycerophospholipid metabolism. In terms of biological role, catalyzes the reduction of the glycolytic intermediate dihydroxyacetone phosphate (DHAP) to sn-glycerol 3-phosphate (G3P), the key precursor for phospholipid synthesis. In Streptococcus uberis (strain ATCC BAA-854 / 0140J), this protein is Glycerol-3-phosphate dehydrogenase [NAD(P)+].